The primary structure comprises 230 residues: Ribosomal RNA large subunit methyltransferase E (230 aa).

Positions 1–13 (MSGSGGKGGGRGG) are enriched in gly residues. The interval 1 to 22 (MSGSGGKGGGRGGLHVRVKTAK) is disordered. Residues glycine 81, tryptophan 83, aspartate 100, aspartate 116, and aspartate 140 each coordinate S-adenosyl-L-methionine. Lysine 180 functions as the Proton acceptor in the catalytic mechanism.

Belongs to the class I-like SAM-binding methyltransferase superfamily. RNA methyltransferase RlmE family.

The protein resides in the cytoplasm. The catalysed reaction is uridine(2552) in 23S rRNA + S-adenosyl-L-methionine = 2'-O-methyluridine(2552) in 23S rRNA + S-adenosyl-L-homocysteine + H(+). Its function is as follows. Specifically methylates the uridine in position 2552 of 23S rRNA at the 2'-O position of the ribose in the fully assembled 50S ribosomal subunit. The chain is Ribosomal RNA large subunit methyltransferase E from Sphingopyxis alaskensis (strain DSM 13593 / LMG 18877 / RB2256) (Sphingomonas alaskensis).